The following is a 107-amino-acid chain: uncharacterized protein (107 aa).

The segment covering 88–97 (EEKKEKDKGK) has biased composition (basic and acidic residues). Residues 88–107 (EEKKEKDKGKKGLLSRLKFW) are disordered. Residues 98 to 107 (KGLLSRLKFW) show a composition bias toward basic residues.

This is an uncharacterized protein from Methanocaldococcus jannaschii (strain ATCC 43067 / DSM 2661 / JAL-1 / JCM 10045 / NBRC 100440) (Methanococcus jannaschii).